The sequence spans 104 residues: Zinc-containing ferredoxin-1 (104 aa).

The segment at 2–37 (GIDPNYRTNRQVVGEHSGHKVYGPVEPPKVLGIHGT) is N-terminal extension. The Zn(2+) site is built by His-17 and His-20. An N6-methyllysine modification is found at Lys-30. Residue His-35 participates in Zn(2+) binding. 2 4Fe-4S ferredoxin-type domains span residues 38–66 (IVGV…WYDT) and 75–104 (KADP…VKPP). Positions 46 and 52 each coordinate [3Fe-4S] cluster. Cys-56 is a binding site for [4Fe-4S] cluster. Asp-77 is a Zn(2+) binding site. [4Fe-4S] cluster contacts are provided by Cys-84, Cys-87, and Cys-90. Cys-94 lines the [3Fe-4S] cluster pocket.

It depends on [3Fe-4S] cluster as a cofactor. [4Fe-4S] cluster is required as a cofactor. Zn(2+) serves as cofactor.

Functionally, ferredoxins are iron-sulfur proteins that transfer electrons in a wide variety of metabolic reactions. In Sulfurisphaera tokodaii (strain DSM 16993 / JCM 10545 / NBRC 100140 / 7) (Sulfolobus tokodaii), this protein is Zinc-containing ferredoxin-1 (zfx1).